The primary structure comprises 193 residues: Leucyl/phenylalanyl-tRNA--protein transferase (193 aa).

Belongs to the L/F-transferase family.

It localises to the cytoplasm. It catalyses the reaction N-terminal L-lysyl-[protein] + L-leucyl-tRNA(Leu) = N-terminal L-leucyl-L-lysyl-[protein] + tRNA(Leu) + H(+). It carries out the reaction N-terminal L-arginyl-[protein] + L-leucyl-tRNA(Leu) = N-terminal L-leucyl-L-arginyl-[protein] + tRNA(Leu) + H(+). The catalysed reaction is L-phenylalanyl-tRNA(Phe) + an N-terminal L-alpha-aminoacyl-[protein] = an N-terminal L-phenylalanyl-L-alpha-aminoacyl-[protein] + tRNA(Phe). Functionally, functions in the N-end rule pathway of protein degradation where it conjugates Leu, Phe and, less efficiently, Met from aminoacyl-tRNAs to the N-termini of proteins containing an N-terminal arginine or lysine. The protein is Leucyl/phenylalanyl-tRNA--protein transferase of Gloeobacter violaceus (strain ATCC 29082 / PCC 7421).